The sequence spans 92 residues: Small ribosomal subunit protein uS19c (92 aa).

Belongs to the universal ribosomal protein uS19 family.

It is found in the plastid. The protein resides in the chloroplast. In terms of biological role, protein S19 forms a complex with S13 that binds strongly to the 16S ribosomal RNA. In Lactuca sativa (Garden lettuce), this protein is Small ribosomal subunit protein uS19c.